The following is a 1298-amino-acid chain: Activating molecule in BECN1-regulated autophagy protein 1 (1298 aa).

The interval 1-22 is interaction with DDB1; the sequence is MKVVPEKNAVRILWGRERGARA. Lys45 participates in a covalent cross-link: Glycyl lysine isopeptide (Lys-Gly) (interchain with G-Cter in ubiquitin). WD repeat units lie at residues 51–90, 93–133, and 135–175; these read DSPR…CVHS, GHRR…ESWF, and DSNN…AVVK. Ser52 carries the phosphoserine; by MTOR modification. The span at 254 to 266 shows a compositional bias: polar residues; that stretch reads IQVGEQSTVQDSA. The disordered stretch occupies residues 254-284; it reads IQVGEQSTVQDSATPSPPPPPPQPSTERPRT. Residues 268–277 show a composition bias toward pro residues; sequence PSPPPPPPQP. Positions 275-281 match the PxP motif 1 motif; it reads PQPSTER. A Phosphoserine modification is found at Ser328. A disordered region spans residues 343 to 413; that stretch reads FVQTEPFHPP…SRYHREIAPG (71 aa). Polar residues predominate over residues 354 to 385; that stretch reads QASSTQQDQGLLNRPSAFSTVQSSTAGNTLRN. Phosphoserine occurs at positions 394 and 443. 3 stretches are compositionally biased toward polar residues: residues 458–467, 547–561, and 590–601; these read SQASVYTSAT, HQPT…SNLS, and NYSSGEASSSWQ. Disordered regions lie at residues 458 to 494, 538 to 561, 590 to 690, and 747 to 796; these read SQAS…NSGS, IESE…SNLS, NYSS…DSLR, and RYQQ…NARM. 2 stretches are compositionally biased toward low complexity: residues 602–614 and 628–639; these read VPSS…SSGS and SSSRLELSSSAS. Residues Ser635 and Ser639 each carry the phosphoserine modification. The span at 661-674 shows a compositional bias: polar residues; it reads YTQSSRSGTVSQEA. An Asymmetric dimethylarginine modification is found at Arg747. Residues 772–781 show a composition bias toward acidic residues; that stretch reads TDLEFEDFED. Ser1043 bears the Phosphoserine; by IKKA mark. The short motif at 1043-1052 is the LIR element; it reads SGVEYYWDQL. The segment covering 1060-1075 has biased composition (polar residues); sequence HSNSRSSERPGTSRAT. The interval 1060–1079 is disordered; the sequence is HSNSRSSERPGTSRATWRTD. Short sequence motifs (TQT motif) lie at residues 1104 to 1106 and 1116 to 1118; these read TQT. Disordered stretches follow at residues 1112-1143, 1190-1214, and 1227-1298; these read QNAE…YGAS, RSSQ…SRGL, and SPRT…PRNR. Over residues 1191 to 1212 the composition is skewed to polar residues; it reads SSQTGTEPGAAHTSSPQPSTSR. Residue Ser1205 is modified to Phosphoserine. The PxP motif 2 signature appears at 1206–1212; that stretch reads PQPSTSR.

Belongs to the WD repeat AMBRA1 family. As to quaternary structure, component of the DCX(AMBRA1) E3 ubiquitin ligase complex, also named CRL4(AMBRA1), at least composed of CUL4 (CUL4A or CUL4B), DDB1, AMBRA1 and RBX1. Interacts with BECN1. Probably forms a complex with BECN1 and PIK3C3. Interacts with BECN2. Interacts with BCL2; leading to prevent interaction with BCN1 and autophagy, interaction is disrupted upon autophagy induction. Interacts with ULK1. Interacts (via PxP motifs) with PPP2CA; enhancing interaction between PPP2CA and MYC or FOXO3. Forms a complex with PPP2CA and BECN1; AMBRA1 and BECN1 components of the complex regulate MYC stability via different pathways. Interacts (TQT motifs) with DYNLL1 and DYNLL2; tethering AMBRA1 and the BECN1-PIK3C3 complex in absence of autophagy. Interacts with TRAF6; interaction is required to mediate 'Lys-63'-linked ubiquitination of ULK1. Interacts with TRIM32; promoting activation of ULK1 by TRIM32 via unanchored 'Lys-63'-linked polyubiquitin chains. Interacts with PRKN. Interacts (via LIR motif) with LC3 (MAP1LC3A, MAP1LC3B or MAP1LC3C). Interacts with HUWE1. Interacts with PTK2/FAK. Interacts with SRC; required for SRC trafficking to autophagosomes. Post-translationally, phosphorylation at Ser-52 by MTOR inhibits its ability to regulate autophagy and mediate ubiquitination of ULK1. Phosphorylation by ULK1 in response to autophagy induction abolishes interaction with DYNLL1 and DYNLL2, releasing AMBRA1 from the cytoskeletal docking site to induce autophagosome nucleation. Phosphorylation by MTOR inhibits interaction with PPP2CA and subsequent dephosphorylation of MYC. Phosphorylation at Ser-1043 by CHUK/IKKA promotes its interaction with ATG8 family proteins GABARAP and MAP1LC3B and its mitophagic activity. Ubiquitinated by RNF2 via 'Lys-48'-linkage in unstressed cells, leading to its degradation by the proteasome. Induction of autophagy promotes stabilization via interaction with CUL4 (CUL4A or CUL4B) and DDB1. Upon prolonged starvation, ubiquitinated and degraded, terminating the autophagy response. In terms of processing, undergoes proteolytic processing by caspase-6 (CASP6), caspase-7 (CASP7) and caspase-8 (CASP8) during apoptosis, resulting in the dismantling of the autophagic machinery and the accomplishment of the programmed cell death program. Also cleaved by calpains during apoptosis, which mediate a complete proteolytic degradation.

The protein localises to the endoplasmic reticulum. The protein resides in the cytoplasm. Its subcellular location is the cytoskeleton. It is found in the cytoplasmic vesicle. It localises to the autophagosome. The protein localises to the mitochondrion. The protein resides in the cytosol. Its subcellular location is the nucleus. It is found in the cell junction. It localises to the focal adhesion. Its pathway is protein modification; protein ubiquitination. In terms of biological role, substrate-recognition component of a DCX (DDB1-CUL4-X-box) E3 ubiquitin-protein ligase complex involved in cell cycle control and autophagy. The DCX(AMBRA1) complex specifically mediates the polyubiquitination of target proteins such as BECN1, CCND1, CCND2, CCND3, ELOC and ULK1. Acts as an upstream master regulator of the transition from G1 to S cell phase: AMBRA1 specifically recognizes and binds phosphorylated cyclin-D (CCND1, CCND2 and CCND3), leading to cyclin-D ubiquitination by the DCX(AMBRA1) complex and subsequent degradation. By controlling the transition from G1 to S phase and cyclin-D degradation, AMBRA1 acts as a tumor suppressor that promotes genomic integrity during DNA replication and counteracts developmental abnormalities and tumor growth. AMBRA1 also regulates the cell cycle by promoting MYC dephosphorylation and degradation independently of the DCX(AMBRA1) complex: acts via interaction with the catalytic subunit of protein phosphatase 2A (PPP2CA), which enhances interaction between PPP2CA and MYC, leading to MYC dephosphorylation and degradation. Acts as a regulator of Cul5-RING (CRL5) E3 ubiquitin-protein ligase complexes by mediating ubiquitination and degradation of Elongin-C (ELOC) component of CRL5 complexes. Acts as a key regulator of autophagy by modulating the BECN1-PIK3C3 complex: controls protein turnover during neuronal development, and regulates normal cell survival and proliferation. In normal conditions, AMBRA1 is tethered to the cytoskeleton via interaction with dyneins DYNLL1 and DYNLL2. Upon autophagy induction, AMBRA1 is released from the cytoskeletal docking site to induce autophagosome nucleation by mediating ubiquitination of proteins involved in autophagy. The DCX(AMBRA1) complex mediates 'Lys-63'-linked ubiquitination of BECN1, increasing the association between BECN1 and PIK3C3 to promote PIK3C3 activity. In collaboration with TRAF6, AMBRA1 mediates 'Lys-63'-linked ubiquitination of ULK1 following autophagy induction, promoting ULK1 stability and kinase activity. Also activates ULK1 via interaction with TRIM32: TRIM32 stimulates ULK1 through unanchored 'Lys-63'-linked polyubiquitin chains. Also acts as an activator of mitophagy via interaction with PRKN and LC3 proteins (MAP1LC3A, MAP1LC3B or MAP1LC3C); possibly by bringing damaged mitochondria onto autophagosomes. Also activates mitophagy by acting as a cofactor for HUWE1; acts by promoting HUWE1-mediated ubiquitination of MFN2. AMBRA1 is also involved in regulatory T-cells (Treg) differentiation by promoting FOXO3 dephosphorylation independently of the DCX(AMBRA1) complex: acts via interaction with PPP2CA, which enhances interaction between PPP2CA and FOXO3, leading to FOXO3 dephosphorylation and stabilization. May act as a regulator of intracellular trafficking, regulating the localization of active PTK2/FAK and SRC. Also involved in transcription regulation by acting as a scaffold for protein complexes at chromatin. The sequence is that of Activating molecule in BECN1-regulated autophagy protein 1 from Homo sapiens (Human).